Consider the following 264-residue polypeptide: Protein ADMETOS (264 aa).

Paternally imprinted expression in the endosperm.

Product of a dosage-sensitive gene that contributes to the maintenance of paternally and maternally imprinted gene expression in the endosperm in order to balance parental contributions. Underlies postzygotic reproductive isolation by promoting triploid seed arrest in a genetic dosage-dependent manner, thus being a component of postzygotic interploidy hybridization barriers. The chain is Protein ADMETOS from Arabidopsis thaliana (Mouse-ear cress).